Consider the following 314-residue polypeptide: MKEKLVAIVGPTAVGKTKTSVMLAKRLNGEVISGDSMQVYRGMDIGTAKITAEEMDGVPHHLIDIKDPSESFSVADFQDLATPLITEIHERGRLPFLVGGTGLYVNAVIHQFNLGDIRADEDYRHELEAFVNSYGVQALHDKLSKIDPKAAAAIHPNNYRRVIRALEIIKLTGKTVTEQARHEEETPSPYNLVMIGLTMERDVLYDRINRRVDQMVEEGLIDEAKKLYDRGIRDCQSVQAIGYKEMYDYLDGNVTLEEAIDTLKRNSRRYAKRQLTWFRNKANVTWFDMTDVDFDKKIMEIHNFIAGKLEEKSK.

10 to 17 (GPTAVGKT) provides a ligand contact to ATP. 12-17 (TAVGKT) lines the substrate pocket. Interaction with substrate tRNA regions lie at residues 35 to 38 (DSMQ), 160 to 164 (RRVIR), 239 to 244 (QAIGYK), and 272 to 279 (KRQLTWFR).

Belongs to the IPP transferase family. In terms of assembly, monomer. It depends on Mg(2+) as a cofactor.

It carries out the reaction adenosine(37) in tRNA + dimethylallyl diphosphate = N(6)-dimethylallyladenosine(37) in tRNA + diphosphate. Catalyzes the transfer of a dimethylallyl group onto the adenine at position 37 in tRNAs that read codons beginning with uridine, leading to the formation of N6-(dimethylallyl)adenosine (i(6)A). This Halalkalibacterium halodurans (strain ATCC BAA-125 / DSM 18197 / FERM 7344 / JCM 9153 / C-125) (Bacillus halodurans) protein is tRNA dimethylallyltransferase (miaA).